A 359-amino-acid chain; its full sequence is Peptide chain release factor 1 (359 aa).

N5-methylglutamine is present on Q235.

It belongs to the prokaryotic/mitochondrial release factor family. Methylated by PrmC. Methylation increases the termination efficiency of RF1.

It localises to the cytoplasm. In terms of biological role, peptide chain release factor 1 directs the termination of translation in response to the peptide chain termination codons UAG and UAA. The protein is Peptide chain release factor 1 of Polynucleobacter asymbioticus (strain DSM 18221 / CIP 109841 / QLW-P1DMWA-1) (Polynucleobacter necessarius subsp. asymbioticus).